The following is a 444-amino-acid chain: MHISTTTAPQGGKLPFYRHLYFQVIVAIIGGILLGHFYPQTGEALKPLGDAFIKLVKMVIAPVIFLTVATGIAGMSDLKKVGRVAGKAMIYFLCFSTLALVVGMLVSNILQPGAGMHINPATLDGKAVASYAQQAHDSTITGFLMNIIPDTIVGAFAKGDILQVLFFSVLFGLALAMVGDLGKPVTNFLQALTAPVFKLVAILMKAAPIGAFGAMAFTIGKYGIGSIANLAFLIGTFYLTSLLFVLVVLGGVARYNGFSILALIRYIKEELLLVLGTSSSEAALPGLMAKMERAGCKRSVVGLVIPTGYSFNLDGTNIYMTLAALFIAQATDIQLSLGDQILLLLVAMLSSKGAAGITGAGFITLAATLSVVPSVPVAGMALILGIDRFMSECRALTNFIGNAVATVVVARWENELDQTQFRAAMAGELPEEIDVVAEPVPTAA.

8 helical membrane-spanning segments follow: residues 19 to 39, 55 to 75, 90 to 110, 161 to 181, 199 to 219, 230 to 250, 343 to 363, and 366 to 386; these read HLYF…HFYP, LVKM…IAGM, IYFL…SNIL, ILQV…VGDL, LVAI…AFTI, LAFL…VVLG, LLLV…AGFI, and AATL…ILGI.

It belongs to the dicarboxylate/amino acid:cation symporter (DAACS) (TC 2.A.23) family.

It is found in the cell inner membrane. In terms of biological role, responsible for the transport of dicarboxylates such as succinate, fumarate, and malate from the periplasm across the membrane. The sequence is that of C4-dicarboxylate transport protein from Allorhizobium ampelinum (strain ATCC BAA-846 / DSM 112012 / S4) (Agrobacterium vitis (strain S4)).